The sequence spans 371 residues: Lipoyl synthase, mitochondrial (371 aa).

Residues 1–24 (MLSRFKCSRLQLQKRAISVTKATT) constitute a mitochondrion transit peptide. A compositionally biased stretch (polar residues) spans 20-29 (TKATTTTASQ). The tract at residues 20 to 42 (TKATTTTASQPKRRRTTTFSDAL) is disordered. 7 residues coordinate [4Fe-4S] cluster: C107, C112, C118, C138, C142, C145, and S353. Residues 121–342 (GGDSSKATAT…RDKALELGFL (222 aa)) enclose the Radical SAM core domain.

This sequence belongs to the radical SAM superfamily. Lipoyl synthase family. [4Fe-4S] cluster serves as cofactor.

It is found in the mitochondrion. The catalysed reaction is [[Fe-S] cluster scaffold protein carrying a second [4Fe-4S](2+) cluster] + N(6)-octanoyl-L-lysyl-[protein] + 2 oxidized [2Fe-2S]-[ferredoxin] + 2 S-adenosyl-L-methionine + 4 H(+) = [[Fe-S] cluster scaffold protein] + N(6)-[(R)-dihydrolipoyl]-L-lysyl-[protein] + 4 Fe(3+) + 2 hydrogen sulfide + 2 5'-deoxyadenosine + 2 L-methionine + 2 reduced [2Fe-2S]-[ferredoxin]. The protein operates within protein modification; protein lipoylation via endogenous pathway; protein N(6)-(lipoyl)lysine from octanoyl-[acyl-carrier-protein]: step 2/2. Functionally, catalyzes the radical-mediated insertion of two sulfur atoms into the C-6 and C-8 positions of the octanoyl moiety bound to the lipoyl domains of lipoate-dependent enzymes, thereby converting the octanoylated domains into lipoylated derivatives. The chain is Lipoyl synthase, mitochondrial from Lachancea thermotolerans (strain ATCC 56472 / CBS 6340 / NRRL Y-8284) (Yeast).